A 402-amino-acid polypeptide reads, in one-letter code: uncharacterized protein (402 aa).

The interval 332-402 (MFSSSSSSSE…PEPPPGKPGR (71 aa)) is disordered. Positions 370 to 379 (SETTSLQQYS) are enriched in polar residues. Residues 393-402 (PEPPPGKPGR) are compositionally biased toward pro residues.

This is an uncharacterized protein from Mus musculus (Mouse).